Reading from the N-terminus, the 609-residue chain is MKIQLRSHESTYGRKMAGTRALWKANGMKVEQFNKPIIAIVNSFTQFVPGHAHLHEVGQFVKSEIEKQGCFAAEFNTIAIDDGIAMGHNGMLYSLPSRDLIADSVEYMIQAHKADAMVCISNCDKITPGMLMASMRLNIPTVFVSGGPMEAGNLNGNRLDLIEVMVQSADAFVSDEQVRQVELNACPTCGSCSGMFTANSMNCLNEAIGLALPGNGTIVATHTRRKQLFADAASLIVKNTYKYYEKGNENVLPLSIATRESFLNAMTLDIAMGGSTNTILHLLAIAHEAGVDFTMQDIDTLSRKTPCLCKISPNASKYYIQDVNRAGGIIGILSELHKSKLIDVSAKRVDGLTVAEAIRQFDICSTDVTKEALNKYKSAPGNRFNLVMASQQNDYDTLDTDRMNGCIRSTKYAYSEDGGLAILKGNIAMDGCVVKTAGIDENIFLFSGPAKVFDSQESACRGILEGKIVSGDVVVIIYEGPKGGPGMQEMLYPTSYIKSRHLGKGCALITDGRFSGGTSGLSIGHISPEAAASGNIGLVRNNDIIAINIPERTINVLLSEEELAKRRKEELQRGDAAFTPPNRKRIVPKTLRAYASMVSSADKGAVRII.

Asp82 is a Mg(2+) binding site. Cys123 serves as a coordination point for [2Fe-2S] cluster. Mg(2+) is bound by residues Asp124 and Lys125. Lys125 bears the N6-carboxylysine mark. Residue Cys192 participates in [2Fe-2S] cluster binding. Glu489 is a binding site for Mg(2+). Ser515 functions as the Proton acceptor in the catalytic mechanism.

The protein belongs to the IlvD/Edd family. In terms of assembly, homodimer. Requires [2Fe-2S] cluster as cofactor. The cofactor is Mg(2+).

The catalysed reaction is (2R)-2,3-dihydroxy-3-methylbutanoate = 3-methyl-2-oxobutanoate + H2O. It carries out the reaction (2R,3R)-2,3-dihydroxy-3-methylpentanoate = (S)-3-methyl-2-oxopentanoate + H2O. The protein operates within amino-acid biosynthesis; L-isoleucine biosynthesis; L-isoleucine from 2-oxobutanoate: step 3/4. It functions in the pathway amino-acid biosynthesis; L-valine biosynthesis; L-valine from pyruvate: step 3/4. Functionally, functions in the biosynthesis of branched-chain amino acids. Catalyzes the dehydration of (2R,3R)-2,3-dihydroxy-3-methylpentanoate (2,3-dihydroxy-3-methylvalerate) into 2-oxo-3-methylpentanoate (2-oxo-3-methylvalerate) and of (2R)-2,3-dihydroxy-3-methylbutanoate (2,3-dihydroxyisovalerate) into 2-oxo-3-methylbutanoate (2-oxoisovalerate), the penultimate precursor to L-isoleucine and L-valine, respectively. The chain is Dihydroxy-acid dehydratase from Azobacteroides pseudotrichonymphae genomovar. CFP2.